Consider the following 145-residue polypeptide: D-aminoacyl-tRNA deacylase (145 aa).

The Gly-cisPro motif, important for rejection of L-amino acids motif lies at 137–138; sequence GP.

It belongs to the DTD family. In terms of assembly, homodimer.

It is found in the cytoplasm. It carries out the reaction glycyl-tRNA(Ala) + H2O = tRNA(Ala) + glycine + H(+). It catalyses the reaction a D-aminoacyl-tRNA + H2O = a tRNA + a D-alpha-amino acid + H(+). Its function is as follows. An aminoacyl-tRNA editing enzyme that deacylates mischarged D-aminoacyl-tRNAs. Also deacylates mischarged glycyl-tRNA(Ala), protecting cells against glycine mischarging by AlaRS. Acts via tRNA-based rather than protein-based catalysis; rejects L-amino acids rather than detecting D-amino acids in the active site. By recycling D-aminoacyl-tRNA to D-amino acids and free tRNA molecules, this enzyme counteracts the toxicity associated with the formation of D-aminoacyl-tRNA entities in vivo and helps enforce protein L-homochirality. The chain is D-aminoacyl-tRNA deacylase from Shewanella baltica (strain OS195).